Here is a 378-residue protein sequence, read N- to C-terminus: UDP-N-acetylglucosamine--N-acetylmuramyl-(pentapeptide) pyrophosphoryl-undecaprenol N-acetylglucosamine transferase (378 aa).

Residues 13 to 15, asparagine 124, arginine 165, serine 193, and glutamine 294 contribute to the UDP-N-acetyl-alpha-D-glucosamine site; that span reads TGG.

This sequence belongs to the glycosyltransferase 28 family. MurG subfamily.

It is found in the cell inner membrane. The enzyme catalyses di-trans,octa-cis-undecaprenyl diphospho-N-acetyl-alpha-D-muramoyl-L-alanyl-D-glutamyl-meso-2,6-diaminopimeloyl-D-alanyl-D-alanine + UDP-N-acetyl-alpha-D-glucosamine = di-trans,octa-cis-undecaprenyl diphospho-[N-acetyl-alpha-D-glucosaminyl-(1-&gt;4)]-N-acetyl-alpha-D-muramoyl-L-alanyl-D-glutamyl-meso-2,6-diaminopimeloyl-D-alanyl-D-alanine + UDP + H(+). Its pathway is cell wall biogenesis; peptidoglycan biosynthesis. Its function is as follows. Cell wall formation. Catalyzes the transfer of a GlcNAc subunit on undecaprenyl-pyrophosphoryl-MurNAc-pentapeptide (lipid intermediate I) to form undecaprenyl-pyrophosphoryl-MurNAc-(pentapeptide)GlcNAc (lipid intermediate II). This chain is UDP-N-acetylglucosamine--N-acetylmuramyl-(pentapeptide) pyrophosphoryl-undecaprenol N-acetylglucosamine transferase, found in Agrobacterium fabrum (strain C58 / ATCC 33970) (Agrobacterium tumefaciens (strain C58)).